The primary structure comprises 620 residues: Protein phosphatase 2C-like domain-containing protein 1 (620 aa).

Positions 173–611 constitute a PPM-type phosphatase domain; that stretch reads GIAICSNNNS…DSITVMVMFL (439 aa).

It belongs to the PP2C family.

In Mus musculus (Mouse), this protein is Protein phosphatase 2C-like domain-containing protein 1 (Pp2d1).